Consider the following 654-residue polypeptide: MKFPMVAAALLLLCAVRAEEEDKKEDVGTVVGIDLGTTYSCVGVFKNGRVEIIANDQGNRITPSYVAFTPEGERLIGDAAKNQLTSNPENTVFDAKRLIGRTWNDPSVQQDIKFLPFKVVEKKTKPYIQVDIGGGQTKTFAPEEISAMVLTKMKETAEAYLGKKVTHAVVTVPAYFNDAQRQATKDAGTIAGLNVMRIINEPTAAAIAYGLDKREGEKNILVFDLGGGTFDVSLLTIDNGVFEVVATNGDTHLGGEDFDQRVMEHFIKLYKKKTGKDVRKDNRAVQKLRREVEKAKRALSSQHQARIEIESFFEGEDFSETLTRAKFEELNMDLFRSTMKPVQKVLEDSDLKKSDIDEIVLVGGSTRIPKIQQLVKEFFNGKEPSRGINPDEAVAYGAAVQAGVLSGDQDTGDLVLLDVCPLTLGIETVGGVMTKLIPRNTVVPTKKSQIFSTASDNQPTVTIKVYEGERPLTKDNHLLGTFDLTGIPPAPRGVPQIEVTFEIDVNGILRVTAEDKGTGNKNKITITNDQNRLTPEEIERMVNDAEKFAEEDKKLKERIDTRNELESYAYSLKNQIGDKEKLGGKLSSEDKETMEKAVEEKIEWLESHQDADIEDFKAKKKELEEIVQPIISKLYGSAGPPPTGEEDTSEKDEL.

The signal sequence occupies residues 1 to 18 (MKFPMVAAALLLLCAVRA). Residues 1–80 (MKFPMVAAAL…EGERLIGDAA (80 aa)) are required for interaction with ELAPOR1. 36-39 (GTTY) provides a ligand contact to ATP. A Phosphoserine modification is found at S86. K96 provides a ligand contact to ATP. K125 is subject to N6-acetyllysine. Residues 125–280 (KPYIQVDIGG…KKKTGKDVRK (156 aa)) are nucleotide-binding (NBD). Y160 carries the post-translational modification 3'-nitrotyrosine. Residue K213 is modified to N6-acetyllysine. 227–229 (GGT) contributes to the ATP binding site. N6-acetyllysine is present on K271. 293–300 (EKAKRALS) lines the ATP pocket. Position 326 is an N6-acetyllysine (K326). K352 is covalently cross-linked (Glycyl lysine isopeptide (Lys-Gly) (interchain with G-Cter in SUMO2)). K353 is subject to N6-acetyllysine; alternate. K353 is covalently cross-linked (Glycyl lysine isopeptide (Lys-Gly) (interchain with G-Cter in SUMO1); alternate). 364-367 (GSTR) is a binding site for ATP. An interdomain linker region spans residues 409-419 (QDTGDLVLLDV). The substrate-binding (SBD) stretch occupies residues 420–500 (CPLTLGIETV…PRGVPQIEVT (81 aa)). The residue at position 447 (K447) is an N6-succinyllysine. Omega-N-methylarginine is present on R492. O-AMP-threonine; alternate is present on T518. A Phosphothreonine; alternate modification is found at T518. At K585 the chain carries N6,N6,N6-trimethyllysine; by METTL21A; in vitro. K585 carries the N6,N6-dimethyllysine; alternate modification. At K585 the chain carries N6-methyllysine; alternate. Residue K591 is modified to N6-methyllysine. A disordered region spans residues 632–654 (SKLYGSAGPPPTGEEDTSEKDEL). T643 and T648 each carry phosphothreonine. The span at 644-654 (GEEDTSEKDEL) shows a compositional bias: acidic residues. Position 649 is a phosphoserine (S649). A Prevents secretion from ER motif is present at residues 651–654 (KDEL).

Belongs to the heat shock protein 70 family. As to quaternary structure, monomer and homooligomer; homooligomerization via the interdomain linker inactivates the chaperone activity and acts as a storage of HSPA5/BiP molecules. Interacts with DNAJC1 (via J domain). Component of an EIF2 complex at least composed of CELF1/CUGBP1, CALR, CALR3, EIF2S1, EIF2S2, HSP90B1 and HSPA5. Part of a large chaperone multiprotein complex comprising DNAJB11, HSP90B1, HSPA5, HYOU, PDIA2, PDIA4, PDIA6, PPIB, SDF2L1, UGGT1 and very small amounts of ERP29, but not, or at very low levels, CALR nor CANX. Interacts with TMEM132A and TRIM21. May form a complex with ERLEC1, OS9, SEL1L and SYVN1. Interacts with DNAJC10. Interacts with DNAJB9/ERdj4; leading to recruit HSPA5/BiP to ERN1/IRE1. Interacts with ERN1/IRE1 (via luminal domain); the interaction takes place following interaction with DNAJB9/ERdj4 and leads to inactivate ERN1/IRE1, the interaction also competitively inhibits ERN1 interaction with MANF. Interacts directly with MANF (via SAP domain); the interaction inhibits ATP binding to HSPA5/BiP and subsequent nucleotide exchange. Interacts with EIF2AK3/PERK (via luminal domain); interaction leads to inactivate EIF2AK3/PERK. Interacts with MX1. Interacts with METTL23. Interacts with CEMIP; the interaction induces calcium leakage from the endoplasmic reticulum and cell migration. Interacts with PCSK4 form; the interaction takes place in the endoplasmic reticulum. Interacts with CIPC. Interacts with CCDC88B (via C-terminus); the interaction opposes ERN1-mediated JNK activation, protecting against apoptosis. Interacts with INPP5K; necessary for INPP5K localization at the endoplasmic reticulum. Interacts with LOXL2; leading to activate the ERN1/IRE1-XBP1 pathway of the unfolded protein response. Interacts with CLU under stressed condition; interaction increases CLU protein stability; facilitates its retrotranslocation and redistribution to the mitochondria; cooperatively suppress stress-induced apoptosis by stabilizing mitochondrial membrane integrity. Interacts with CCDC47. Interacts with CLN3. Interacts with ELAPOR1; may regulate the function of HSPA5 in apoptosis and cell proliferation. Interacts with CASP7. Interacts with ILDR2; the interaction stabilizes ILDR2 expression. Interacts with ADAM7. Post-translationally, in unstressed cells, AMPylation at Thr-518 by FICD inactivates the chaperome activity: AMPylated form is locked in a relatively inert state and only weakly stimulated by J domain-containing proteins. In response to endoplasmic reticulum stress, de-AMPylation by the same protein, FICD, restores the chaperone activity.

Its subcellular location is the endoplasmic reticulum lumen. It is found in the melanosome. The protein resides in the cytoplasm. It localises to the cell surface. It carries out the reaction ATP + H2O = ADP + phosphate + H(+). The chaperone activity is regulated by ATP-induced allosteric coupling of the nucleotide-binding (NBD) and substrate-binding (SBD) domains. In the ADP-bound and nucleotide-free (apo) states, the two domains have little interaction. In contrast, in the ATP-bound state the two domains are tightly coupled, which results in drastically accelerated kinetics in both binding and release of polypeptide substrates. J domain-containing co-chaperones (DNAJB9/ERdj4 or DNAJC10/ERdj5) stimulate the ATPase activity and are required for efficient substrate recognition by HSPA5/BiP. Homooligomerization inactivates participating HSPA5/BiP protomers and probably act as reservoirs to store HSPA5/BiP molecules when they are not needed by the cell. Functionally, endoplasmic reticulum chaperone that plays a key role in protein folding and quality control in the endoplasmic reticulum lumen. Involved in the correct folding of proteins and degradation of misfolded proteins via its interaction with DNAJC10/ERdj5, probably to facilitate the release of DNAJC10/ERdj5 from its substrate. Acts as a key repressor of the EIF2AK3/PERK and ERN1/IRE1-mediated unfolded protein response (UPR). In the unstressed endoplasmic reticulum, recruited by DNAJB9/ERdj4 to the luminal region of ERN1/IRE1, leading to disrupt the dimerization of ERN1/IRE1, thereby inactivating ERN1/IRE1. Also binds and inactivates EIF2AK3/PERK in unstressed cells. Accumulation of misfolded protein in the endoplasmic reticulum causes release of HSPA5/BiP from ERN1/IRE1 and EIF2AK3/PERK, allowing their homodimerization and subsequent activation. Plays an auxiliary role in post-translational transport of small presecretory proteins across endoplasmic reticulum (ER). May function as an allosteric modulator for SEC61 channel-forming translocon complex, likely cooperating with SEC62 to enable the productive insertion of these precursors into SEC61 channel. Appears to specifically regulate translocation of precursors having inhibitory residues in their mature region that weaken channel gating. May also play a role in apoptosis and cell proliferation. The sequence is that of Endoplasmic reticulum chaperone BiP from Cricetulus griseus (Chinese hamster).